Here is a 487-residue protein sequence, read N- to C-terminus: Meiotic recombination protein SPO11-4 (487 aa).

Positions 1–56 (MDDSTDDDSYHPRKHYAYDRQVSSSRWRTSREYIRGPGPETHTTESAQDGQDPPAG) are disordered. Residues 119-252 (KSRVEARKTL…LGIIAAEKGI (134 aa)) enclose the Topo IIA-type catalytic domain. Tyr-213 serves as the catalytic O-(5'-phospho-DNA)-tyrosine intermediate. Mg(2+) contacts are provided by Glu-301 and Asp-353.

This sequence belongs to the TOP6A family. Homodimer. Interacts with TOP6B. Mg(2+) is required as a cofactor.

Its subcellular location is the nucleus. The enzyme catalyses ATP-dependent breakage, passage and rejoining of double-stranded DNA.. Required for meiotic recombination. Mediates DNA cleavage that forms the double-strand breaks (DSB) that initiate meiotic recombination. Possesses double-stranded DNA cleavage activity in vitro. This is Meiotic recombination protein SPO11-4 (SPO11-4) from Oryza sativa subsp. japonica (Rice).